We begin with the raw amino-acid sequence, 217 residues long: Uracil-DNA glycosylase (217 aa).

Asp62 serves as the catalytic Proton acceptor.

The protein belongs to the uracil-DNA glycosylase (UDG) superfamily. UNG family.

The protein localises to the cytoplasm. The enzyme catalyses Hydrolyzes single-stranded DNA or mismatched double-stranded DNA and polynucleotides, releasing free uracil.. Functionally, excises uracil residues from the DNA which can arise as a result of misincorporation of dUMP residues by DNA polymerase or due to deamination of cytosine. In Streptococcus pyogenes serotype M49 (strain NZ131), this protein is Uracil-DNA glycosylase.